We begin with the raw amino-acid sequence, 5084 residues long: Apicidin F synthase (5084 aa).

Residues 209–606 (ARILQRQPDK…VGRLDSQVKL (398 aa)) form an adenylation 1 region. The Carrier 1 domain maps to 731–808 (HETDNCQRLL…EAASSMREVV (78 aa)). At Ser-768 the chain carries O-(pantetheine 4'-phosphoryl)serine. 2 condensation regions span residues 822-1124 (YPLS…FPIY) and 1309-1609 (EIYC…SILV). The segment at 1788–2192 (EDPTREAVFS…IGRKDNQIKI (405 aa)) is adenylation 2. Residues 2341–2415 (VVKDDPVSEL…DMAKGMAPLS (75 aa)) enclose the Carrier 2 domain. Ser-2376 carries the post-translational modification O-(pantetheine 4'-phosphoryl)serine. The segment at 2415 to 2441 (SLTAPESTSSSSPQSFSTSTSTTIIEN) is disordered. The segment covering 2421-2437 (STSSSSPQSFSTSTSTT) has biased composition (low complexity). A condensation 3 region spans residues 2478-2755 (EDIFPCTPMQ…IVTLPRQLNI (278 aa)). The interval 2935-3328 (RNNPRARAVV…GRRDGQIKLR (394 aa)) is adenylation 3. The region spanning 3463-3539 (ETWSSSEAIV…DMASRLSRPE (77 aa)) is the Carrier 3 domain. Ser-3500 carries the post-translational modification O-(pantetheine 4'-phosphoryl)serine. A condensation 4 region spans residues 3581 to 3866 (EDIYPCTPLQ…IATVPSRTTI (286 aa)). The segment at 4029-4426 (RKQVELSPSH…TVSWIGRKDH (398 aa)) is adenylation 4. The 78-residue stretch at 4554–4631 (ALKTPKERLL…DMADLLGPLR (78 aa)) folds into the Carrier 4 domain. The residue at position 4592 (Ser-4592) is an O-(pantetheine 4'-phosphoryl)serine. The condensation 5 stretch occupies residues 4669–4948 (EQIYPCTAYQ…ISKLPLRIQL (280 aa)).

This sequence belongs to the NRP synthetase family.

The protein operates within secondary metabolite biosynthesis. Functionally, non-ribosomal peptide synthetase; part of the gene cluster that mediates the biosynthesis of the cyclic tetrapeptide apicidin F (APF). The non-ribosomal peptide synthetase apf1 incorporates four different amino acids to produce apicidin F: L-phenylalanine, D-pipecolic acid (D-pip), N-methoxy-L-tryptophan and L-2-aminooctanedioic acid. L-Phenylalanine is the only proteinogenic amino acid directly used by apf1. The 3 other apf1 substrates are non-proteinogenic and have to be modified by other enzymes of the cluster. Lysine is converted to delta-1-pyrroline-5-carboxylate (P5C) which is reduced to L-pipecolic acid (L-pip) by apf3. L-pip is epimerized to D-pip, probably by apf1 activity, prior to incorporation. L-Tryptophan is N-oxidyzed by one of the cytochrome P450 monooxygenases (apf7 or apf8), and further methylated at the hydroxy group by the O-methyltransferase apf6 to yield N-methoxy-L-tryptophan. The synthesis of the fourth apf1 substrate is more complex. The fatty acid synthase apf5 is involved in the synthesis of the octanoic acid backbone of L-2-aminooctanedioic acid by fixing one acetyl-CoA unit and three malonyl-CoA units. Then one of the cytochrome P450 monooxygenases (apf7 or apf8) may oxidize this backbone to 2-oxooctanoic acid. The aminotransferase apf4 is predicted to catalyze the exchange of the keto group with an amino group. The next step would be the oxidation of 2-aminooctanoic acid by one of the cytochrome P450 monooxygenases (apf7 or apf8). The last step is the oxidation of 2-amino-8-hydroxyoctanoic acid to 2-aminooctanedioic acid is catalyzed by the FAD-dependent monooxygenase apf9. This Gibberella fujikuroi (strain CBS 195.34 / IMI 58289 / NRRL A-6831) (Bakanae and foot rot disease fungus) protein is Apicidin F synthase.